A 250-amino-acid chain; its full sequence is Exosome complex component Rrp41 (250 aa).

The protein belongs to the RNase PH family. Rrp41 subfamily. In terms of assembly, component of the archaeal exosome complex. Forms a hexameric ring-like arrangement composed of 3 Rrp41-Rrp42 heterodimers. The hexameric ring associates with a trimer of Rrp4 and/or Csl4 subunits.

It is found in the cytoplasm. Catalytic component of the exosome, which is a complex involved in RNA degradation. Has 3'-&gt;5' exoribonuclease activity. Can also synthesize heteromeric RNA-tails. The chain is Exosome complex component Rrp41 from Pyrococcus furiosus (strain ATCC 43587 / DSM 3638 / JCM 8422 / Vc1).